Consider the following 37-residue polypeptide: Cytochrome b6-f complex subunit 5 (37 aa).

The helical transmembrane segment at 5-25 (LPSGIVLGLIPITLAGLFVTA) threads the bilayer.

Belongs to the PetG family. In terms of assembly, the 4 large subunits of the cytochrome b6-f complex are cytochrome b6, subunit IV (17 kDa polypeptide, PetD), cytochrome f and the Rieske protein, while the 4 small subunits are PetG, PetL, PetM and PetN. The complex functions as a dimer.

The protein resides in the plastid. Its subcellular location is the chloroplast thylakoid membrane. Functionally, component of the cytochrome b6-f complex, which mediates electron transfer between photosystem II (PSII) and photosystem I (PSI), cyclic electron flow around PSI, and state transitions. PetG is required for either the stability or assembly of the cytochrome b6-f complex. This Pinus thunbergii (Japanese black pine) protein is Cytochrome b6-f complex subunit 5.